The chain runs to 209 residues: APC/C-CDH1 modulator 1 (209 aa).

Residues 1 to 38 form a disordered region; it reads MISPSKKRTILSSKNINQKPRAVVKGNELRSPSKRRSQ. Ser48 is subject to Phosphoserine. Thr161 carries the post-translational modification Phosphothreonine. Ser202 bears the Phosphoserine mark.

In terms of assembly, interacts with CDH1, BMH1 and BMH2.

Functionally, negative regulator of GDH1, the activator protein that regulates the ubiquitin ligase activity and substrate specificity of the anaphase promoting complex/cyclosome (APC/C), and which is required for exit from mitosis, cytokinesis and formation of prereplicative complexes in G1. This Saccharomyces cerevisiae (strain ATCC 204508 / S288c) (Baker's yeast) protein is APC/C-CDH1 modulator 1 (ACM1).